The chain runs to 227 residues: Cytochrome c oxidase subunit 2 (227 aa).

The Mitochondrial intermembrane portion of the chain corresponds to 1–14 (MAYPFQLGLQDATS). The helical transmembrane segment at 15-45 (PIMEELLHFHDHTLMIVFLISSLVLYIISLM) threads the bilayer. Residues 46–59 (LTTKLTHTSTMDAQ) are Mitochondrial matrix-facing. A helical membrane pass occupies residues 60-87 (EVETVWTILPAIILVLIALPSLRILYMM). Residues 88 to 227 (DEINNPSLTV…YFETWSALMV (140 aa)) are Mitochondrial intermembrane-facing. Residues His-161, Cys-196, Glu-198, Cys-200, His-204, and Met-207 each contribute to the Cu cation site. Residue Glu-198 participates in Mg(2+) binding. Position 218 is a phosphotyrosine (Tyr-218).

It belongs to the cytochrome c oxidase subunit 2 family. In terms of assembly, component of the cytochrome c oxidase (complex IV, CIV), a multisubunit enzyme composed of 14 subunits. The complex is composed of a catalytic core of 3 subunits MT-CO1, MT-CO2 and MT-CO3, encoded in the mitochondrial DNA, and 11 supernumerary subunits COX4I, COX5A, COX5B, COX6A, COX6B, COX6C, COX7A, COX7B, COX7C, COX8 and NDUFA4, which are encoded in the nuclear genome. The complex exists as a monomer or a dimer and forms supercomplexes (SCs) in the inner mitochondrial membrane with NADH-ubiquinone oxidoreductase (complex I, CI) and ubiquinol-cytochrome c oxidoreductase (cytochrome b-c1 complex, complex III, CIII), resulting in different assemblies (supercomplex SCI(1)III(2)IV(1) and megacomplex MCI(2)III(2)IV(2)). Found in a complex with TMEM177, COA6, COX18, COX20, SCO1 and SCO2. Interacts with TMEM177 in a COX20-dependent manner. Interacts with COX20. Interacts with COX16. The cofactor is Cu cation.

It is found in the mitochondrion inner membrane. The enzyme catalyses 4 Fe(II)-[cytochrome c] + O2 + 8 H(+)(in) = 4 Fe(III)-[cytochrome c] + 2 H2O + 4 H(+)(out). Component of the cytochrome c oxidase, the last enzyme in the mitochondrial electron transport chain which drives oxidative phosphorylation. The respiratory chain contains 3 multisubunit complexes succinate dehydrogenase (complex II, CII), ubiquinol-cytochrome c oxidoreductase (cytochrome b-c1 complex, complex III, CIII) and cytochrome c oxidase (complex IV, CIV), that cooperate to transfer electrons derived from NADH and succinate to molecular oxygen, creating an electrochemical gradient over the inner membrane that drives transmembrane transport and the ATP synthase. Cytochrome c oxidase is the component of the respiratory chain that catalyzes the reduction of oxygen to water. Electrons originating from reduced cytochrome c in the intermembrane space (IMS) are transferred via the dinuclear copper A center (CU(A)) of subunit 2 and heme A of subunit 1 to the active site in subunit 1, a binuclear center (BNC) formed by heme A3 and copper B (CU(B)). The BNC reduces molecular oxygen to 2 water molecules using 4 electrons from cytochrome c in the IMS and 4 protons from the mitochondrial matrix. The polypeptide is Cytochrome c oxidase subunit 2 (MT-CO2) (Cerdocyon thous (Crab-eating fox)).